A 286-amino-acid chain; its full sequence is 2-dehydro-3-deoxyphosphooctonate aldolase (286 aa).

This sequence belongs to the KdsA family.

It is found in the cytoplasm. The enzyme catalyses D-arabinose 5-phosphate + phosphoenolpyruvate + H2O = 3-deoxy-alpha-D-manno-2-octulosonate-8-phosphate + phosphate. Its pathway is carbohydrate biosynthesis; 3-deoxy-D-manno-octulosonate biosynthesis; 3-deoxy-D-manno-octulosonate from D-ribulose 5-phosphate: step 2/3. It functions in the pathway bacterial outer membrane biogenesis; lipopolysaccharide biosynthesis. The chain is 2-dehydro-3-deoxyphosphooctonate aldolase from Bradyrhizobium sp. (strain BTAi1 / ATCC BAA-1182).